The chain runs to 351 residues: L-threonine 3-dehydrogenase (351 aa).

Residue Cys39 participates in Zn(2+) binding. Active-site charge relay system residues include Thr41 and His44. Zn(2+) is bound by residues His64, Glu65, Cys94, Cys97, Cys100, and Cys108. NAD(+) contacts are provided by residues Ile176, Asp196, Arg201, 271-273 (LGI), and 295-296 (IY).

The protein belongs to the zinc-containing alcohol dehydrogenase family. As to quaternary structure, homotetramer. The cofactor is Zn(2+).

The protein resides in the cytoplasm. It catalyses the reaction L-threonine + NAD(+) = (2S)-2-amino-3-oxobutanoate + NADH + H(+). The protein operates within amino-acid degradation; L-threonine degradation via oxydo-reductase pathway; glycine from L-threonine: step 1/2. In terms of biological role, catalyzes the NAD(+)-dependent oxidation of L-threonine to 2-amino-3-ketobutyrate. The polypeptide is L-threonine 3-dehydrogenase (Francisella tularensis subsp. mediasiatica (strain FSC147)).